We begin with the raw amino-acid sequence, 741 residues long: Ribosome-releasing factor 2, mitochondrial (741 aa).

Residues 1-29 (MLKYEFLHGLQKRSHYLRQLSGQFFSRSY) constitute a mitochondrion transit peptide. The 280-residue stretch at 31 to 310 (SKIRNIGILA…AVNSYLPAPE (280 aa)) folds into the tr-type G domain. Residues 40 to 47 (AHIDAGKT), 104 to 108 (DTPGH), and 158 to 161 (NKMD) contribute to the GTP site.

Belongs to the TRAFAC class translation factor GTPase superfamily. Classic translation factor GTPase family. EF-G/EF-2 subfamily.

It is found in the mitochondrion. In terms of biological role, mitochondrial GTPase that mediates the disassembly of ribosomes from messenger RNA at the termination of mitochondrial protein biosynthesis. Not involved in the GTP-dependent ribosomal translocation step during translation elongation. In Drosophila ananassae (Fruit fly), this protein is Ribosome-releasing factor 2, mitochondrial.